Consider the following 370-residue polypeptide: Queuine tRNA-ribosyltransferase (370 aa).

Aspartate 89 serves as the catalytic Proton acceptor. Residues 89–93 (DSGGF), aspartate 143, glutamine 187, and glycine 214 each bind substrate. The tract at residues 245-251 (GVGTPED) is RNA binding. The active-site Nucleophile is the aspartate 264. Positions 269–273 (TRNAR) are RNA binding; important for wobble base 34 recognition. 4 residues coordinate Zn(2+): cysteine 302, cysteine 304, cysteine 307, and histidine 333.

It belongs to the queuine tRNA-ribosyltransferase family. As to quaternary structure, homodimer. Within each dimer, one monomer is responsible for RNA recognition and catalysis, while the other monomer binds to the replacement base PreQ1. Zn(2+) serves as cofactor.

It catalyses the reaction 7-aminomethyl-7-carbaguanine + guanosine(34) in tRNA = 7-aminomethyl-7-carbaguanosine(34) in tRNA + guanine. It participates in tRNA modification; tRNA-queuosine biosynthesis. Functionally, catalyzes the base-exchange of a guanine (G) residue with the queuine precursor 7-aminomethyl-7-deazaguanine (PreQ1) at position 34 (anticodon wobble position) in tRNAs with GU(N) anticodons (tRNA-Asp, -Asn, -His and -Tyr). Catalysis occurs through a double-displacement mechanism. The nucleophile active site attacks the C1' of nucleotide 34 to detach the guanine base from the RNA, forming a covalent enzyme-RNA intermediate. The proton acceptor active site deprotonates the incoming PreQ1, allowing a nucleophilic attack on the C1' of the ribose to form the product. After dissociation, two additional enzymatic reactions on the tRNA convert PreQ1 to queuine (Q), resulting in the hypermodified nucleoside queuosine (7-(((4,5-cis-dihydroxy-2-cyclopenten-1-yl)amino)methyl)-7-deazaguanosine). This Aromatoleum aromaticum (strain DSM 19018 / LMG 30748 / EbN1) (Azoarcus sp. (strain EbN1)) protein is Queuine tRNA-ribosyltransferase.